The primary structure comprises 310 residues: Acetaldehyde dehydrogenase 1 (310 aa).

12-15 serves as a coordination point for NAD(+); it reads SGNI. C127 functions as the Acyl-thioester intermediate in the catalytic mechanism. NAD(+)-binding positions include 163-171 and N282; that span reads SAGPGTRAN.

It belongs to the acetaldehyde dehydrogenase family.

The enzyme catalyses acetaldehyde + NAD(+) + CoA = acetyl-CoA + NADH + H(+). In Mycobacterium sp. (strain KMS), this protein is Acetaldehyde dehydrogenase 1.